A 553-amino-acid polypeptide reads, in one-letter code: MSDIALTVSVLALVAVVGLWIGNIKVRGVGFGIGGVLFGGIIVGHFVDQAGMTLSSDMLHFIQEFGLILFVYTIGIQVGPGFFASLRVSGLRLNLFAILIVIIGGLVTAILHKIFAIPLPVVLGIFSGAVTNTPALGAGQQILRDLGTPMEAVDQMGMSYAMAYPFGICGILLTMWLMRMIFRVNVEAEAKQHEDTLSNGHSLIQTMNIRVENPNLNNMAIQDVPILNSDKIICSRLKRDETLMVPSPGTIIQSGDLLHLVGQPVDLHNAQLVIGQEVDTSLSTRGTDLRVERVVVTNEKVLGKRIRDLHFKERYDVVISRLNRAGVELVASSDASLQFGDILNLVGRPSSIDAVANVVGNAQQKLQQVQMLPVFIGIGLGVLLGSIPLFVPGFPVALKLGLAGGPLIMALILGRIGSIGKLYWFMPPSANLALRELGIVLFLAVVGLKSGGDFIDTLTQGDGLSWIGYGIFITAIPLITVGLLARIFAKMNYLTLCGMLAGSMTDPPALAFANNLHATSGAAALSYATVYPLVMFLRIITPQLLAVLFWGLG.

A run of 5 helical transmembrane segments spans residues 4–24, 28–48, 65–85, 95–115, and 158–178; these read IALT…IGNI, GVGF…HFVD, FGLI…FFAS, LFAI…HKIF, and MSYA…MWLM. RCK C-terminal domains follow at residues 192–276 and 279–361; these read QHED…VIGQ and DTSL…VVGN. 6 helical membrane passes run 371–391, 393–413, 437–457, 464–484, 493–513, and 533–553; these read MLPV…PLFV, GFPV…ALIL, LGIV…FIDT, LSWI…VGLL, YLTL…LAFA, and LVMF…WGLG.

This sequence belongs to the AAE transporter (TC 2.A.81) family. YidE subfamily.

It is found in the cell membrane. The chain is Putative transport protein CKO_00031 from Citrobacter koseri (strain ATCC BAA-895 / CDC 4225-83 / SGSC4696).